Here is a 79-residue protein sequence, read N- to C-terminus: Acyl carrier protein (79 aa).

Positions 2–77 (SEIGERVKKI…DATKFLEKNA (76 aa)) constitute a Carrier domain. An O-(pantetheine 4'-phosphoryl)serine modification is found at serine 37.

It belongs to the acyl carrier protein (ACP) family. 4'-phosphopantetheine is transferred from CoA to a specific serine of apo-ACP by AcpS. This modification is essential for activity because fatty acids are bound in thioester linkage to the sulfhydryl of the prosthetic group.

It is found in the cytoplasm. Its pathway is lipid metabolism; fatty acid biosynthesis. Functionally, carrier of the growing fatty acid chain in fatty acid biosynthesis. This Nitrobacter winogradskyi (strain ATCC 25391 / DSM 10237 / CIP 104748 / NCIMB 11846 / Nb-255) protein is Acyl carrier protein.